The chain runs to 349 residues: GDSL esterase/lipase At1g58525 (349 aa).

A signal peptide spans 1–19; it reads MKLQILLLALVLIAVEANA. The N-linked (GlcNAc...) asparagine glycan is linked to Asn25. Ser37 acts as the Nucleophile in catalysis. The N-linked (GlcNAc...) asparagine glycan is linked to Asn316. Active-site residues include Asp324 and His327.

This sequence belongs to the 'GDSL' lipolytic enzyme family.

The protein localises to the secreted. This chain is GDSL esterase/lipase At1g58525, found in Arabidopsis thaliana (Mouse-ear cress).